Here is a 354-residue protein sequence, read N- to C-terminus: Putative cinnamyl alcohol dehydrogenase 4 (354 aa).

8 residues coordinate Zn(2+): Cys-47, His-69, Glu-70, Cys-100, Cys-103, Cys-106, Cys-114, and Cys-163. Residues Thr-167, 188–193 (GLGGLG), 211–216 (STSESK), Thr-251, and 297–299 (SVT) contribute to the NADP(+) site.

The protein belongs to the zinc-containing alcohol dehydrogenase family. As to quaternary structure, homodimer. Zn(2+) is required as a cofactor.

The enzyme catalyses (E)-cinnamyl alcohol + NADP(+) = (E)-cinnamaldehyde + NADPH + H(+). It catalyses the reaction (E)-coniferol + NADP(+) = (E)-coniferaldehyde + NADPH + H(+). The catalysed reaction is (E)-sinapyl alcohol + NADP(+) = (E)-sinapaldehyde + NADPH + H(+). It carries out the reaction (E)-4-coumaroyl alcohol + NADP(+) = (E)-4-coumaraldehyde + NADPH + H(+). The enzyme catalyses (E)-caffeyl alcohol + NADP(+) = (E)-caffeyl aldehyde + NADPH + H(+). It functions in the pathway aromatic compound metabolism; phenylpropanoid biosynthesis. Functionally, involved in lignin biosynthesis. Catalyzes the final step specific for the production of lignin monomers. Catalyzes the NADPH-dependent reduction of coniferaldehyde, 5-hydroxyconiferaldehyde, sinapaldehyde, 4-coumaraldehyde and caffeyl aldehyde to their respective alcohols. The protein is Putative cinnamyl alcohol dehydrogenase 4 of Oryza sativa subsp. japonica (Rice).